The following is a 235-amino-acid chain: Proteasome subunit alpha (235 aa).

Belongs to the peptidase T1A family. The 20S proteasome core is composed of 14 alpha and 14 beta subunits that assemble into four stacked heptameric rings, resulting in a barrel-shaped structure. The two inner rings, each composed of seven catalytic beta subunits, are sandwiched by two outer rings, each composed of seven alpha subunits. The catalytic chamber with the active sites is on the inside of the barrel. Has a gated structure, the ends of the cylinder being occluded by the N-termini of the alpha-subunits. Is capped by the proteasome-associated ATPase, ARC.

It localises to the cytoplasm. It functions in the pathway protein degradation; proteasomal Pup-dependent pathway. With respect to regulation, the formation of the proteasomal ATPase ARC-20S proteasome complex, likely via the docking of the C-termini of ARC into the intersubunit pockets in the alpha-rings, may trigger opening of the gate for substrate entry. Interconversion between the open-gate and close-gate conformations leads to a dynamic regulation of the 20S proteasome proteolysis activity. Component of the proteasome core, a large protease complex with broad specificity involved in protein degradation. This chain is Proteasome subunit alpha, found in Paenarthrobacter aurescens (strain TC1).